A 545-amino-acid polypeptide reads, in one-letter code: CTP synthase (545 aa).

The tract at residues Met-1–Leu-266 is amidoligase domain. Residue Ser-14 participates in CTP binding. Ser-14 contacts UTP. Residues Ser-15–Ile-20 and Asp-72 contribute to the ATP site. Asp-72 and Glu-140 together coordinate Mg(2+). Residues Asp-147–Glu-149, Lys-187–Gln-192, and Lys-223 contribute to the CTP site. UTP-binding positions include Lys-187–Gln-192 and Lys-223. Lys-239 to Val-241 contacts ATP. The 252-residue stretch at Thr-291–Arg-542 folds into the Glutamine amidotransferase type-1 domain. Gly-352 contacts L-glutamine. Catalysis depends on Cys-379, which acts as the Nucleophile; for glutamine hydrolysis. Residues Leu-380–Gln-383, Glu-403, and Arg-470 contribute to the L-glutamine site. Catalysis depends on residues His-515 and Glu-517.

The protein belongs to the CTP synthase family. In terms of assembly, homotetramer.

It carries out the reaction UTP + L-glutamine + ATP + H2O = CTP + L-glutamate + ADP + phosphate + 2 H(+). The catalysed reaction is L-glutamine + H2O = L-glutamate + NH4(+). The enzyme catalyses UTP + NH4(+) + ATP = CTP + ADP + phosphate + 2 H(+). Its pathway is pyrimidine metabolism; CTP biosynthesis via de novo pathway; CTP from UDP: step 2/2. With respect to regulation, allosterically activated by GTP, when glutamine is the substrate; GTP has no effect on the reaction when ammonia is the substrate. The allosteric effector GTP functions by stabilizing the protein conformation that binds the tetrahedral intermediate(s) formed during glutamine hydrolysis. Inhibited by the product CTP, via allosteric rather than competitive inhibition. Catalyzes the ATP-dependent amination of UTP to CTP with either L-glutamine or ammonia as the source of nitrogen. Regulates intracellular CTP levels through interactions with the four ribonucleotide triphosphates. This chain is CTP synthase, found in Escherichia coli O127:H6 (strain E2348/69 / EPEC).